The sequence spans 287 residues: Bifunctional protein FolD (287 aa).

Residues 160 to 162, serine 189, and threonine 230 each bind NADP(+); that span reads GRS.

This sequence belongs to the tetrahydrofolate dehydrogenase/cyclohydrolase family. As to quaternary structure, homodimer.

The catalysed reaction is (6R)-5,10-methylene-5,6,7,8-tetrahydrofolate + NADP(+) = (6R)-5,10-methenyltetrahydrofolate + NADPH. The enzyme catalyses (6R)-5,10-methenyltetrahydrofolate + H2O = (6R)-10-formyltetrahydrofolate + H(+). Its pathway is one-carbon metabolism; tetrahydrofolate interconversion. Functionally, catalyzes the oxidation of 5,10-methylenetetrahydrofolate to 5,10-methenyltetrahydrofolate and then the hydrolysis of 5,10-methenyltetrahydrofolate to 10-formyltetrahydrofolate. The sequence is that of Bifunctional protein FolD from Chlamydia trachomatis serovar D (strain ATCC VR-885 / DSM 19411 / UW-3/Cx).